Reading from the N-terminus, the 308-residue chain is MTSKLDQLKKFTTVVADTGDFGAIKSLEPEDATTNPSLLLKAASDVNNAQMLADAFSGAKGDIGLACDRFAVAIGQEILKVVPGRVSTEVDARLSFDTNALIERSERLIGLYDAAGIKRDRVLIKLAATWEGIRAAEKLEKDGIQTNLTLLFSFAQAIACAEAGVFLISPFVGRIYDWYKKSSGTDYVGAEDPGVQSVTRIYNYYKANDFKTVVMGASFRNLNQIEQLAGCDRLTISTDLLKKLAEDTGTLERKLAPGNAGEARQSLTESQFRWASNEDAMATEKLAEGIRQFARDQEKLEALLSAKA.

Residue K125 is the Schiff-base intermediate with substrate of the active site.

It belongs to the transaldolase family. Type 1 subfamily. In terms of assembly, homodimer.

It localises to the cytoplasm. It catalyses the reaction D-sedoheptulose 7-phosphate + D-glyceraldehyde 3-phosphate = D-erythrose 4-phosphate + beta-D-fructose 6-phosphate. Its pathway is carbohydrate degradation; pentose phosphate pathway; D-glyceraldehyde 3-phosphate and beta-D-fructose 6-phosphate from D-ribose 5-phosphate and D-xylulose 5-phosphate (non-oxidative stage): step 2/3. Its function is as follows. Transaldolase is important for the balance of metabolites in the pentose-phosphate pathway. This Pseudomonas savastanoi pv. phaseolicola (strain 1448A / Race 6) (Pseudomonas syringae pv. phaseolicola (strain 1448A / Race 6)) protein is Transaldolase.